The primary structure comprises 395 residues: 1-deoxy-D-xylulose 5-phosphate reductoisomerase (395 aa).

NADPH contacts are provided by T10, G11, S12, I13, N38, and N123. K124 contacts 1-deoxy-D-xylulose 5-phosphate. Residue E125 participates in NADPH binding. D149 contributes to the Mn(2+) binding site. The 1-deoxy-D-xylulose 5-phosphate site is built by S150, E151, S185, and H208. Mn(2+) is bound at residue E151. G214 serves as a coordination point for NADPH. Residues S221, N226, K227, and E230 each coordinate 1-deoxy-D-xylulose 5-phosphate. Position 230 (E230) interacts with Mn(2+).

The protein belongs to the DXR family. It depends on Mg(2+) as a cofactor. Mn(2+) is required as a cofactor.

The enzyme catalyses 2-C-methyl-D-erythritol 4-phosphate + NADP(+) = 1-deoxy-D-xylulose 5-phosphate + NADPH + H(+). It participates in isoprenoid biosynthesis; isopentenyl diphosphate biosynthesis via DXP pathway; isopentenyl diphosphate from 1-deoxy-D-xylulose 5-phosphate: step 1/6. Its function is as follows. Catalyzes the NADPH-dependent rearrangement and reduction of 1-deoxy-D-xylulose-5-phosphate (DXP) to 2-C-methyl-D-erythritol 4-phosphate (MEP). The polypeptide is 1-deoxy-D-xylulose 5-phosphate reductoisomerase (Shewanella woodyi (strain ATCC 51908 / MS32)).